The primary structure comprises 463 residues: Female germline-specific tumor suppressor gld-1 (463 aa).

The span at 1-10 (MPSCTTPTYG) shows a compositional bias: polar residues. The tract at residues 1 to 76 (MPSCTTPTYG…RAPPPARLTL (76 aa)) is disordered. A compositionally biased stretch (low complexity) spans 11–31 (VSTQLESQSSESPSRSSVMTP). The tract at residues 135 to 205 (PTATEPIEVE…PEPAGDMISI (71 aa)) is qua1 domain; involved in homodimerization. The region spanning 208-260 (KIYVPKNEYPDYNFVGRILGPRGMTAKQLEQDTGCKIMVRGKGSMRDKSKESA) is the KH domain. Positions 305 to 336 (APEGTDELKRKQLMELAIINGTYRPMKSPNPA) are qua2 domain; involved in RNA binding. The segment at 443–463 (NTNVSPSGASPSASSVNNTSF) is disordered. The span at 447 to 457 (SPSGASPSASS) shows a compositional bias: low complexity.

Homodimer. Phosphorylated by cdk-2 which may negatively regulate its expression in distal mitotic germline cells. Post-translationally, undergoes proteasomal degradation in proximal oocytes following mating. As to expression, expressed in proximal and distal oocytes in female worms but is eliminated from proximal oocytes following mating.

In terms of biological role, RNA-binding protein which recognizes the 5'-UACUCAU-3' RNA consensus sequence. Binds sequences in both the 5'coding and the 3'-UTR region of rme-2 mRNA. Binds sequences in the 3'-UTR region of cye-1 mRNA. Binds to cyb-2.1, cyb-2.2 and cyb-3 mRNA. Binds sequences in the 3'-UTR region of tra-2 mRNA. Binds to the 3' UTR of Notch receptor homolog glp-1, thereby repressing glp-1 translation in the embryo. Binding to the glp-1 3' UTR is inhibited by pos-1 binding to an overlapping binding site in the glp-1 3' UTR. Germ line-specific tumor suppressor essential for oogenesis. Controls the spatial pattern of translation of multiple oogenesis specific mRNAs (e.g. yolk receptor rme-2) by repression of translation during early meiotic prophase (leptotene to pachytene) and then derepression of translation during diplotene/ diakinesis, following its degradation. Also functions to promote the male sexual fate in the hermaphrodite germline but not the male germline. Represses translation of the vacuolar ATPase component vha-13 in the distal gonad. Functions redundantly with gld-2 to promote the initiation of meiotic development and/or inhibit stem cell proliferation. By regulating cye-1 expression, prevents entry into mitosis in meiotic germline cells. This Caenorhabditis elegans protein is Female germline-specific tumor suppressor gld-1 (gld-1).